The following is a 61-amino-acid chain: Large ribosomal subunit protein uL30 (61 aa).

Belongs to the universal ribosomal protein uL30 family. In terms of assembly, part of the 50S ribosomal subunit.

In Bifidobacterium longum (strain DJO10A), this protein is Large ribosomal subunit protein uL30.